We begin with the raw amino-acid sequence, 206 residues long: Casparian strip membrane protein 1 (206 aa).

An N-acetylalanine modification is found at alanine 2. At 2–43 (AKESTTIDVGEPSTVTKSSSHVVKDAKKKGFVAVASRGGAKR) the chain is on the cytoplasmic side. A helical membrane pass occupies residues 44-64 (GLAIFDFLLRLAAIAVTIGAA). Over 65–95 (SVMYTAEETLPFFTQFLQFQAGYDDLPAFQY) the chain is Extracellular. The chain crosses the membrane as a helical span at residues 96-116 (FVIAVAVVASYLVLSLPFSIV). Over 117–127 (SIVRPHAVAPR) the chain is Cytoplasmic. Residues 128 to 148 (LILLICDTLVVTLNTSAAAAA) form a helical membrane-spanning segment. The Extracellular portion of the chain corresponds to 149-180 (ASITYLAHNGNQSTNWLPICQQFGDFCQNVST). N-linked (GlcNAc...) asparagine glycans are attached at residues asparagine 159 and asparagine 177. A helical membrane pass occupies residues 181–201 (AVVADSIAILFFIVLIIISAI). At 202-206 (ALKRH) the chain is on the cytoplasmic side.

This sequence belongs to the Casparian strip membrane proteins (CASP) family. Homodimer and heterodimers with other CASP proteins. Interacts with CASP2, CASP3, CASP4 and CASP5.

The protein localises to the cell membrane. Regulates membrane-cell wall junctions and localized cell wall deposition. Required for establishment of the Casparian strip membrane domain (CSD) and the subsequent formation of Casparian strips, a cell wall modification of the root endodermis that determines an apoplastic barrier between the intraorganismal apoplasm and the extraorganismal apoplasm and prevents lateral diffusion. This chain is Casparian strip membrane protein 1 (CASP1), found in Arabidopsis thaliana (Mouse-ear cress).